A 462-amino-acid chain; its full sequence is Bifunctional enzyme LpxC/FabZ (462 aa).

The tract at residues 1–302 is UDP-3-O-acyl-N-acetylglucosamine deacetylase; sequence MQKQQTLKDK…MARLIRKEIK (302 aa). Positions 78, 260, and 264 each coordinate Zn(2+). Catalysis depends on histidine 287, which acts as the Proton donor. Residues 303–462 are 3-hydroxyacyl-[acyl-carrier-protein] dehydratase; that stretch reads QNEAQAPVYN…FMAQIIQNKE (160 aa). Residue histidine 364 is part of the active site.

In the N-terminal section; belongs to the LpxC family. The protein in the C-terminal section; belongs to the thioester dehydratase family. Zn(2+) is required as a cofactor.

It localises to the cytoplasm. It catalyses the reaction a UDP-3-O-[(3R)-3-hydroxyacyl]-N-acetyl-alpha-D-glucosamine + H2O = a UDP-3-O-[(3R)-3-hydroxyacyl]-alpha-D-glucosamine + acetate. The catalysed reaction is a (3R)-hydroxyacyl-[ACP] = a (2E)-enoyl-[ACP] + H2O. The protein operates within glycolipid biosynthesis; lipid IV(A) biosynthesis; lipid IV(A) from (3R)-3-hydroxytetradecanoyl-[acyl-carrier-protein] and UDP-N-acetyl-alpha-D-glucosamine: step 2/6. Catalyzes the hydrolysis of UDP-3-O-myristoyl-N-acetylglucosamine to form UDP-3-O-myristoylglucosamine and acetate, the committed step in lipid A biosynthesis. In terms of biological role, involved in unsaturated fatty acids biosynthesis. Catalyzes the dehydration of short chain beta-hydroxyacyl-ACPs and long chain saturated and unsaturated beta-hydroxyacyl-ACPs. This is Bifunctional enzyme LpxC/FabZ (lpxC/fabZ) from Porphyromonas gingivalis (strain ATCC BAA-308 / W83).